A 758-amino-acid polypeptide reads, in one-letter code: ATP-dependent RNA helicase dbp7 (758 aa).

Disordered regions lie at residues 26–99 (GGTW…QPRQ) and 111–130 (PQKV…KPTN). Residues 35 to 45 (AKKIAKHHAKG) are compositionally biased toward basic residues. Residues 84–99 (GKQQSHTHPHSNQPRQ) show a composition bias toward polar residues. Residues 111–127 (PQKVEEVKEEGHVEDAK) show a composition bias toward basic and acidic residues. The short motif at 138 to 167 (DTFTNLGLSPSLAAHLLTKLELKAPTAIQK) is the Q motif element. Residues 171–372 (SQLLKEEGDA…EISLKDAVHI (202 aa)) enclose the Helicase ATP-binding domain. 184-191 (AETGSGKT) provides a ligand contact to ATP. A DEAD box motif is present at residues 308 to 311 (DEGD). The 206-residue stretch at 398–603 (QLKQSYAVVA…ALTRADANDI (206 aa)) folds into the Helicase C-terminal domain. 2 disordered regions span residues 455–483 (KEDG…APAT) and 691–758 (VPGL…FNLA). Over residues 696–709 (QGKEETKKDFKAER) the composition is skewed to basic and acidic residues.

The protein belongs to the DEAD box helicase family. DDX31/DBP7 subfamily.

It localises to the nucleus. The protein localises to the nucleolus. The catalysed reaction is ATP + H2O = ADP + phosphate + H(+). In terms of biological role, ATP-binding RNA helicase involved in the biogenesis of 60S ribosomal subunits and is required for the normal formation of 25S and 5.8S rRNAs. This chain is ATP-dependent RNA helicase dbp7 (dbp7), found in Neosartorya fischeri (strain ATCC 1020 / DSM 3700 / CBS 544.65 / FGSC A1164 / JCM 1740 / NRRL 181 / WB 181) (Aspergillus fischerianus).